Here is a 231-residue protein sequence, read N- to C-terminus: Large ribosomal subunit protein uL1 (231 aa).

It belongs to the universal ribosomal protein uL1 family. In terms of assembly, part of the 50S ribosomal subunit.

Functionally, binds directly to 23S rRNA. The L1 stalk is quite mobile in the ribosome, and is involved in E site tRNA release. In terms of biological role, protein L1 is also a translational repressor protein, it controls the translation of the L11 operon by binding to its mRNA. This Alcanivorax borkumensis (strain ATCC 700651 / DSM 11573 / NCIMB 13689 / SK2) protein is Large ribosomal subunit protein uL1.